Here is a 459-residue protein sequence, read N- to C-terminus: Exodeoxyribonuclease 7 large subunit (459 aa).

It belongs to the XseA family. Heterooligomer composed of large and small subunits.

It localises to the cytoplasm. It carries out the reaction Exonucleolytic cleavage in either 5'- to 3'- or 3'- to 5'-direction to yield nucleoside 5'-phosphates.. Functionally, bidirectionally degrades single-stranded DNA into large acid-insoluble oligonucleotides, which are then degraded further into small acid-soluble oligonucleotides. The protein is Exodeoxyribonuclease 7 large subunit of Pseudomonas aeruginosa (strain ATCC 15692 / DSM 22644 / CIP 104116 / JCM 14847 / LMG 12228 / 1C / PRS 101 / PAO1).